A 417-amino-acid polypeptide reads, in one-letter code: Phosphoglycerate kinase 1 (417 aa).

Ser-2 bears the N-acetylserine mark. Ser-2 and Ser-4 each carry phosphoserine. At Lys-6 the chain carries N6-succinyllysine. Lys-11 is subject to N6-acetyllysine. Residues Val-23, Asp-24, Phe-25, Asn-26, Gln-38, Arg-39, Ser-62, His-63, Gly-65, and Arg-66 each coordinate (2R)-3-phosphoglycerate. The mitochondrial targeting region exposed following cis-trans isomerization by PIN1 and recognized by the TOM complex for mitochondrial translocation of the protein stretch occupies residues Gln-38–Ala-43. Residue Lys-75 is modified to N6-acetyllysine. Tyr-76 is modified (phosphotyrosine). An N6-acetyllysine mark is found at Lys-86 and Lys-91. An N6-(2-hydroxyisobutyryl)lysine; alternate modification is found at Lys-97. N6-acetyllysine; alternate is present on Lys-97. Positions 122 and 123 each coordinate (2R)-3-phosphoglycerate. At Lys-131 the chain carries N6-acetyllysine; alternate. Residue Lys-131 is modified to N6-malonyllysine; alternate. N6-acetyllysine is present on Lys-146. 2 residues coordinate (2R)-3-phosphoglycerate: His-170 and Arg-171. Residue Lys-191 is modified to N6-succinyllysine. Residue Tyr-196 is modified to Phosphotyrosine. Lys-199 bears the N6-acetyllysine mark. Position 203 is a phosphoserine (Ser-203). Gly-214 lines the ADP pocket. Residue Gly-214 coordinates CDP. Ala-215 and Lys-216 together coordinate AMP. Residue Ala-215 coordinates ATP. Ala-215 is a Mg(2+) binding site. Lys-216 bears the N6-(2-hydroxyisobutyryl)lysine mark. Positions 218 and 219 each coordinate Mg(2+). Asp-219 provides a ligand contact to CDP. An AMP-binding site is contributed by Lys-220. Lys-220 is an ATP binding site. Lys-220 carries the N6-(2-hydroxyisobutyryl)lysine modification. Gly-238 is an ADP binding site. A CDP-binding site is contributed by Gly-238. Gly-239 lines the AMP pocket. Gly-239 provides a ligand contact to ATP. An N6-acetyllysine mark is found at Lys-267 and Lys-291. Gly-313 is a binding site for AMP. Gly-313 serves as a coordination point for ATP. Lys-323 bears the N6-(2-hydroxyisobutyryl)lysine mark. The CDP site is built by Gly-338, Val-340, and Phe-343. Residue Phe-343 participates in ADP binding. Residue Glu-344 coordinates AMP. Residues Glu-344, Asp-375, and Thr-376 each contribute to the ATP site. Asp-375 is a binding site for Mg(2+).

This sequence belongs to the phosphoglycerate kinase family. Monomer. Interacts with kinase MAPK1/ERK2; the interaction is direct, occurs under hypoxic conditions, and promotes its interaction with PIN1. Interacts with peptidyl-prolyl cis-trans isomerase PIN1; the interaction is direct, occurs under hypoxic conditions, and targets the protein to the mitochondrion by promoting interactions with the TOM complex. Interacts with mitochondrial circRNA mcPGK1 (via its 2nd stem-loop); the interaction is direct and targets the protein to the mitochondrion by promoting interactions with the TOM complex. Interacts with pyruvate dehydrogenase kinase PDK1; the interaction is direct, occurs under hypoxic conditions and leads to PDK1-mediated inhibition of pyruvate dehydrogenase complex activity. Requires Mg(2+) as cofactor. In terms of processing, phosphorylated at Ser-203 by MAPK1/ERK2 under hypoxic conditions, which promotes its mitochondrial targeting.

It localises to the cytoplasm. Its subcellular location is the cytosol. The protein localises to the mitochondrion matrix. The enzyme catalyses (2R)-3-phosphoglycerate + ATP = (2R)-3-phospho-glyceroyl phosphate + ADP. It carries out the reaction L-seryl-[protein] + ATP = O-phospho-L-seryl-[protein] + ADP + H(+). The protein operates within carbohydrate degradation; glycolysis; pyruvate from D-glyceraldehyde 3-phosphate: step 2/5. Functionally, catalyzes one of the two ATP producing reactions in the glycolytic pathway via the reversible conversion of 1,3-diphosphoglycerate to 3-phosphoglycerate. Both L- and D- forms of purine and pyrimidine nucleotides can be used as substrates, but the activity is much lower on pyrimidines. In addition to its role as a glycolytic enzyme, it seems that PGK-1 acts as a polymerase alpha cofactor protein (primer recognition protein). Acts as a protein kinase when localized to the mitochondrion where it phosphorylates pyruvate dehydrogenase kinase PDK1 to inhibit pyruvate dehydrogenase complex activity and suppress the formation of acetyl-coenzyme A from pyruvate, and consequently inhibit oxidative phosphorylation and promote glycolysis. May play a role in sperm motility. This Notamacropus eugenii (Tammar wallaby) protein is Phosphoglycerate kinase 1 (PGK1).